Consider the following 95-residue polypeptide: Aspartyl/glutamyl-tRNA(Asn/Gln) amidotransferase subunit C (95 aa).

This sequence belongs to the GatC family. In terms of assembly, heterotrimer of A, B and C subunits.

It catalyses the reaction L-glutamyl-tRNA(Gln) + L-glutamine + ATP + H2O = L-glutaminyl-tRNA(Gln) + L-glutamate + ADP + phosphate + H(+). It carries out the reaction L-aspartyl-tRNA(Asn) + L-glutamine + ATP + H2O = L-asparaginyl-tRNA(Asn) + L-glutamate + ADP + phosphate + 2 H(+). Allows the formation of correctly charged Asn-tRNA(Asn) or Gln-tRNA(Gln) through the transamidation of misacylated Asp-tRNA(Asn) or Glu-tRNA(Gln) in organisms which lack either or both of asparaginyl-tRNA or glutaminyl-tRNA synthetases. The reaction takes place in the presence of glutamine and ATP through an activated phospho-Asp-tRNA(Asn) or phospho-Glu-tRNA(Gln). The sequence is that of Aspartyl/glutamyl-tRNA(Asn/Gln) amidotransferase subunit C from Pseudomonas paraeruginosa (strain DSM 24068 / PA7) (Pseudomonas aeruginosa (strain PA7)).